The sequence spans 337 residues: DNA-directed RNA polymerase subunit alpha (337 aa).

Residues 1 to 233 form an alpha N-terminal domain (alpha-NTD) region; that stretch reads MIQKNWQELI…DQLAIFVNFE (233 aa). The segment at 249-337 is alpha C-terminal domain (alpha-CTD); that stretch reads FNPALLKKVD…DLAKRYEDQY (89 aa).

It belongs to the RNA polymerase alpha chain family. Homodimer. The RNAP catalytic core consists of 2 alpha, 1 beta, 1 beta' and 1 omega subunit. When a sigma factor is associated with the core the holoenzyme is formed, which can initiate transcription.

The enzyme catalyses RNA(n) + a ribonucleoside 5'-triphosphate = RNA(n+1) + diphosphate. Its function is as follows. DNA-dependent RNA polymerase catalyzes the transcription of DNA into RNA using the four ribonucleoside triphosphates as substrates. The sequence is that of DNA-directed RNA polymerase subunit alpha from Brucella anthropi (strain ATCC 49188 / DSM 6882 / CCUG 24695 / JCM 21032 / LMG 3331 / NBRC 15819 / NCTC 12168 / Alc 37) (Ochrobactrum anthropi).